A 730-amino-acid polypeptide reads, in one-letter code: Wall-associated receptor kinase-like 3 (730 aa).

An N-terminal signal peptide occupies residues 1-25 (MKTKTYNFRYIVASVLTLLMNGSSA). Residues 26–357 (ATPPNSNSSS…AKLAHVLRGV (332 aa)) lie on the Extracellular side of the membrane. Asparagine 32, asparagine 38, asparagine 68, asparagine 90, asparagine 119, asparagine 132, asparagine 212, asparagine 233, and asparagine 269 each carry an N-linked (GlcNAc...) asparagine glycan. An atypical EGF-like region spans residues 283–340 (CLCRYGYFSRMSYRSCYCGSGYRGNPYIRGGCIDIDECEVPNKCGEDTCVNMAGRYSC). 3 disulfides stabilise this stretch: cysteine 285–cysteine 298, cysteine 320–cysteine 331, and cysteine 326–cysteine 340. A helical transmembrane segment spans residues 358 to 378 (LIGLLGLLFFVIGIFGLYKFI). Residues 379 to 730 (RKRRRIIRSM…LMEINRIYDS (352 aa)) are Cytoplasmic-facing. One can recognise a Protein kinase domain in the interval 428-699 (FSIDRVLGQG…REVSIKLERI (272 aa)). Residues 434–442 (LGQGGQGTV) and lysine 456 each bind ATP. The active-site Proton acceptor is the aspartate 553. Residues 703 to 730 (PKDLDVHTENEEEEEEDQLMEINRIYDS) form a disordered region. Over residues 712–721 (NEEEEEEDQL) the composition is skewed to acidic residues.

It belongs to the protein kinase superfamily. Ser/Thr protein kinase family. Preferentially expressed in roots and flowers.

It localises to the membrane. It catalyses the reaction L-seryl-[protein] + ATP = O-phospho-L-seryl-[protein] + ADP + H(+). The catalysed reaction is L-threonyl-[protein] + ATP = O-phospho-L-threonyl-[protein] + ADP + H(+). In terms of biological role, serine/threonine-protein kinase that may function as a signaling receptor of extracellular matrix component. This is Wall-associated receptor kinase-like 3 (WAKL3) from Arabidopsis thaliana (Mouse-ear cress).